The chain runs to 729 residues: Fatty acid oxidation complex subunit alpha (729 aa).

The tract at residues 1 to 189 (MLYKGDTLYV…KIGLIDGIVK (189 aa)) is enoyl-CoA hydratase/isomerase. Residue aspartate 296 coordinates substrate. Residues 311 to 729 (EMPKQAAVLG…ARPVGALKTA (419 aa)) are 3-hydroxyacyl-CoA dehydrogenase. NAD(+)-binding positions include methionine 324, aspartate 343, 400–402 (VVE), lysine 407, and serine 429. Histidine 450 acts as the For 3-hydroxyacyl-CoA dehydrogenase activity in catalysis. An NAD(+)-binding site is contributed by asparagine 453. Asparagine 500 and tyrosine 660 together coordinate substrate. A disordered region spans residues 708 to 729 (RHNEPYYPPVEPARPVGALKTA).

It in the N-terminal section; belongs to the enoyl-CoA hydratase/isomerase family. In the C-terminal section; belongs to the 3-hydroxyacyl-CoA dehydrogenase family. As to quaternary structure, heterotetramer of two alpha chains (FadB) and two beta chains (FadA).

The enzyme catalyses a (3S)-3-hydroxyacyl-CoA + NAD(+) = a 3-oxoacyl-CoA + NADH + H(+). It carries out the reaction a (3S)-3-hydroxyacyl-CoA = a (2E)-enoyl-CoA + H2O. It catalyses the reaction a 4-saturated-(3S)-3-hydroxyacyl-CoA = a (3E)-enoyl-CoA + H2O. The catalysed reaction is (3S)-3-hydroxybutanoyl-CoA = (3R)-3-hydroxybutanoyl-CoA. The enzyme catalyses a (3Z)-enoyl-CoA = a 4-saturated (2E)-enoyl-CoA. It carries out the reaction a (3E)-enoyl-CoA = a 4-saturated (2E)-enoyl-CoA. It participates in lipid metabolism; fatty acid beta-oxidation. In terms of biological role, involved in the aerobic and anaerobic degradation of long-chain fatty acids via beta-oxidation cycle. Catalyzes the formation of 3-oxoacyl-CoA from enoyl-CoA via L-3-hydroxyacyl-CoA. It can also use D-3-hydroxyacyl-CoA and cis-3-enoyl-CoA as substrate. This chain is Fatty acid oxidation complex subunit alpha, found in Enterobacter sp. (strain 638).